A 384-amino-acid polypeptide reads, in one-letter code: Carbamoyl phosphate synthase small chain (384 aa).

The tract at residues 1-192 (MMKRIPAILV…LTDNIRVHRV (192 aa)) is CPSase. L-glutamine is bound by residues S51, G244, and G246. A Glutamine amidotransferase type-1 domain is found at 196–382 (KVIVIDFGVK…IEIMTKSKNK (187 aa)). C272 acts as the Nucleophile in catalysis. Residues M273, Q276, N312, G314, and F315 each coordinate L-glutamine. Catalysis depends on residues H355 and E357.

This sequence belongs to the CarA family. As to quaternary structure, composed of two chains; the small (or glutamine) chain promotes the hydrolysis of glutamine to ammonia, which is used by the large (or ammonia) chain to synthesize carbamoyl phosphate. Tetramer of heterodimers (alpha,beta)4.

It localises to the plastid. Its subcellular location is the chloroplast. It catalyses the reaction hydrogencarbonate + L-glutamine + 2 ATP + H2O = carbamoyl phosphate + L-glutamate + 2 ADP + phosphate + 2 H(+). The catalysed reaction is L-glutamine + H2O = L-glutamate + NH4(+). The protein operates within amino-acid biosynthesis; L-arginine biosynthesis; carbamoyl phosphate from bicarbonate: step 1/1. It functions in the pathway pyrimidine metabolism; UMP biosynthesis via de novo pathway; (S)-dihydroorotate from bicarbonate: step 1/3. Its function is as follows. Small subunit of the glutamine-dependent carbamoyl phosphate synthetase (CPSase). CPSase catalyzes the formation of carbamoyl phosphate from the ammonia moiety of glutamine, carbonate, and phosphate donated by ATP, constituting the first step of 2 biosynthetic pathways, one leading to arginine and/or urea and the other to pyrimidine nucleotides. The small subunit (glutamine amidotransferase) binds and cleaves glutamine to supply the large subunit with the substrate ammonia. The protein is Carbamoyl phosphate synthase small chain of Pyropia yezoensis (Susabi-nori).